A 142-amino-acid polypeptide reads, in one-letter code: MKTFSAKPAEVKRDWYVVDAEGKTLGRLSTEIARRLRGKHKPEYTPHVDTGDYIVVVNAEKVRVTGNKEQDKIYYKHTGYIGNMKSISLGKLRDRRPELIIETAVKGMLPKNPLGRAMFRKLKVYAGPSHQHQAQQPKPLEI.

It belongs to the universal ribosomal protein uL13 family. As to quaternary structure, part of the 50S ribosomal subunit.

This protein is one of the early assembly proteins of the 50S ribosomal subunit, although it is not seen to bind rRNA by itself. It is important during the early stages of 50S assembly. This is Large ribosomal subunit protein uL13 from Methylococcus capsulatus (strain ATCC 33009 / NCIMB 11132 / Bath).